A 215-amino-acid chain; its full sequence is MSRSGKSLTKYKIVFLGEQGVGKTSLITRFMYDTFDDHYQATIGIDFLSKTMYLDDKTIRLQLWDTAGQERFRSLIPSYIRDSRVAIIVYDITKRKSFEYIDKWIEDVKNERGDENVILCIVGNKSDLSDERQISTEEGEKKAKLLGAKIFMETSTKAGYNVKALFKKIAKSLPEFQNSESTPLDSENANSANQNKPGVIDISTAEEQEQSACQC.

17 to 24 (GEQGVGKT) provides a ligand contact to GTP. The Effector region motif lies at 39 to 47 (YQATIGIDF). Residues 65–69 (DTAGQ) and 124–127 (NKSD) contribute to the GTP site. Polar residues predominate over residues 178 to 196 (NSESTPLDSENANSANQNK). The interval 178–215 (NSESTPLDSENANSANQNKPGVIDISTAEEQEQSACQC) is disordered. Residues cysteine 213 and cysteine 215 are each lipidated (S-geranylgeranyl cysteine). Residue cysteine 215 is modified to Cysteine methyl ester.

This sequence belongs to the small GTPase superfamily. Rab family. Interacts with YIF1, YIP3 and YIP4.

Its subcellular location is the cell membrane. Protein transport. Might participate in post-Golgi transport. In Saccharomyces cerevisiae (strain ATCC 204508 / S288c) (Baker's yeast), this protein is GTP-binding protein YPT6 (YPT6).